Here is a 1080-residue protein sequence, read N- to C-terminus: DNA-directed RNA polymerase subunit beta C-terminal section (1080 aa).

The protein belongs to the RNA polymerase beta chain family. In terms of assembly, in plastids the minimal PEP RNA polymerase catalytic core is composed of four subunits: alpha, beta, beta', and beta''. When a (nuclear-encoded) sigma factor is associated with the core the holoenzyme is formed, which can initiate transcription.

It localises to the plastid. Its subcellular location is the chloroplast. It catalyses the reaction RNA(n) + a ribonucleoside 5'-triphosphate = RNA(n+1) + diphosphate. In terms of biological role, DNA-dependent RNA polymerase catalyzes the transcription of DNA into RNA using the four ribonucleoside triphosphates as substrates. This is DNA-directed RNA polymerase subunit beta C-terminal section (rpoB2) from Stigeoclonium helveticum (Green alga).